Reading from the N-terminus, the 247-residue chain is STING ER exit protein (247 aa).

Serine 127 bears the Phosphoserine mark. Residues 195-216 (EAREIADSYANNARIIEKQLQR) adopt a coiled-coil conformation. The segment at 215-247 (QRKGGKLSDVGIKTKTEDAPPPQKKQRGTLLER) is disordered.

The protein belongs to the STEEP1 family.

In terms of biological role, molecular adapter that stimulates membrane curvature formation and subsequent endoplasmic reticulum exit site (ERES) establishment by recruiting PI3K complex I, leading to COPII vesicle-mediated transport. In Drosophila melanogaster (Fruit fly), this protein is STING ER exit protein.